Here is a 230-residue protein sequence, read N- to C-terminus: Ubiquitin carboxyl-terminal hydrolase isozyme L3 (230 aa).

The UCH catalytic domain occupies arginine 5–alanine 229. The interaction with ubiquitin stretch occupies residues proline 8–proline 13. Catalysis depends on cysteine 95, which acts as the Nucleophile. A Phosphoserine modification is found at serine 130. An interaction with ubiquitin. Crossover loop which restricts access of large ubiquitin adducts to the active site region spans residues alanine 152–alanine 159. Histidine 169 acts as the Proton donor in catalysis. The interaction with ubiquitin stretch occupies residues glutamate 219–alanine 224.

The protein belongs to the peptidase C12 family. In terms of assembly, preferentially binds diubiquitin; the interaction does not hydrolyze diubiquitin but, in vitro, inhibits the hydrolyzing activity on other substrates.

It is found in the cytoplasm. The enzyme catalyses Thiol-dependent hydrolysis of ester, thioester, amide, peptide and isopeptide bonds formed by the C-terminal Gly of ubiquitin (a 76-residue protein attached to proteins as an intracellular targeting signal).. With respect to regulation, inhibited by monoubiquitin and diubiquitin. Deubiquitinating enzyme (DUB) that controls levels of cellular ubiquitin through processing of ubiquitin precursors and ubiquitinated proteins. Thiol protease that recognizes and hydrolyzes a peptide bond at the C-terminal glycine of either ubiquitin or NEDD8. Has a 10-fold preference for Arg and Lys at position P3, and exhibits a preference towards 'Lys-48'-linked ubiquitin chains. Deubiquitinates ENAC in apical compartments, thereby regulating apical membrane recycling. Indirectly increases the phosphorylation of IGFIR, AKT and FOXO1 and promotes insulin-signaling and insulin-induced adipogenesis. Required for stress-response retinal, skeletal muscle and germ cell maintenance. May be involved in working memory. Can hydrolyze UBB(+1), a mutated form of ubiquitin which is not effectively degraded by the proteasome. This is Ubiquitin carboxyl-terminal hydrolase isozyme L3 (UCHL3) from Sus scrofa (Pig).